The chain runs to 284 residues: 2-dehydro-3-deoxyphosphooctonate aldolase (284 aa).

It belongs to the KdsA family.

It is found in the cytoplasm. It catalyses the reaction D-arabinose 5-phosphate + phosphoenolpyruvate + H2O = 3-deoxy-alpha-D-manno-2-octulosonate-8-phosphate + phosphate. The protein operates within carbohydrate biosynthesis; 3-deoxy-D-manno-octulosonate biosynthesis; 3-deoxy-D-manno-octulosonate from D-ribulose 5-phosphate: step 2/3. It participates in bacterial outer membrane biogenesis; lipopolysaccharide biosynthesis. The sequence is that of 2-dehydro-3-deoxyphosphooctonate aldolase from Edwardsiella ictaluri (strain 93-146).